The sequence spans 250 residues: Undecaprenyl-diphosphatase (250 aa).

7 consecutive transmembrane segments (helical) span residues 35 to 55, 73 to 93, 100 to 120, 146 to 166, 171 to 191, 200 to 220, and 229 to 249; these read DLSV…IFVG, INLT…GVLL, SLSN…ALLI, ALAI…SLLI, EIAL…AGLL, SYSI…LFIL, and LKIF…LGGI.

It belongs to the UppP family.

It is found in the cell inner membrane. It catalyses the reaction di-trans,octa-cis-undecaprenyl diphosphate + H2O = di-trans,octa-cis-undecaprenyl phosphate + phosphate + H(+). Catalyzes the dephosphorylation of undecaprenyl diphosphate (UPP). Confers resistance to bacitracin. The protein is Undecaprenyl-diphosphatase of Thermosipho melanesiensis (strain DSM 12029 / CIP 104789 / BI429).